The following is a 219-amino-acid chain: Ras-related protein Rab-3D (219 aa).

Ala-2 carries the N-acetylalanine modification. Residue 29–37 (GNSSVGKTS) participates in GDP binding. GTP contacts are provided by Ser-31, Ser-32, Val-33, Gly-34, Lys-35, Thr-36, Ser-37, Pro-49, and Ser-53. A Mg(2+)-binding site is contributed by Thr-36. The Switch 1 motif lies at 49 to 58 (PAFVSTVGID). Mg(2+) contacts are provided by Thr-54 and Asp-77. Gly-80 is a binding site for GTP. Residues 80-96 (GQERYRTITTAYYRGAM) carry the Switch 2 motif. At Thr-86 the chain carries Phosphothreonine; by LRRK2. GTP is bound by residues Asn-135, Lys-136, Asp-138, Ala-166, and Lys-167. GDP is bound by residues 135-138 (NKCD) and 165-167 (SAK). Ser-190 bears the Phosphoserine mark. Residues 190-219 (SLEPSSSPGSNGKGPALGDTPPPQPSSCSC) form a disordered region. A compositionally biased stretch (low complexity) spans 193 to 203 (PSSSPGSNGKG). Positions 209 to 219 (TPPPQPSSCSC) are enriched in pro residues. S-geranylgeranyl cysteine attachment occurs at residues Cys-217 and Cys-219. Residue Cys-219 is modified to Cysteine methyl ester.

Belongs to the small GTPase superfamily. Rab family. As to quaternary structure, interacts with RIMS1, RIMS2, RPH3A, RPH3AL and RAB3IP. The GTP-bound form interacts with REP15. Interacts with CHM and CHML; phosphorylation at Thr-86 disrupts these interactions. Interacts with MADD (via uDENN domain); the GTP-bound form is preferred for interaction. The cofactor is Mg(2+). Phosphorylation of Thr-86 in the switch II region by LRRK2 prevents the association of RAB regulatory proteins, including CHM and CHML. Predominantly expressed in the adipocyte tissue, but is also expressed in several other organs including skin, spleen, heart and lung.

The protein localises to the cell membrane. The catalysed reaction is GTP + H2O = GDP + phosphate + H(+). With respect to regulation, regulated by guanine nucleotide exchange factors (GEFs) which promote the exchange of bound GDP for free GTP. Regulated by GTPase activating proteins (GAPs) which increase the GTP hydrolysis activity. Inhibited by GDP dissociation inhibitors (GDIs) which prevent Rab-GDP dissociation. Its function is as follows. The small GTPases Rab are key regulators of intracellular membrane trafficking, from the formation of transport vesicles to their fusion with membranes. Rabs cycle between an inactive GDP-bound form and an active GTP-bound form that is able to recruit to membranes different sets of downstream effectors directly responsible for vesicle formation, movement, tethering and fusion. RAB3D may be involved in the insulin-induced exocytosis of GLUT4-containing vesicles in adipocytes. The protein is Ras-related protein Rab-3D of Mus musculus (Mouse).